A 256-amino-acid polypeptide reads, in one-letter code: MTSVTMRQMLEAGVHFGHQTRYWNPKMAPFIFGARSNIHIINLEKTLPLFNDAMKYLEQVAANRGKILFVGTKKTMRKVIEEEARRCGMPYVNHRWLGGMLTNFKTIKASIARMKDLQAMRDDGRLNRFSKKEALGMMRELEKLVCNVGGIGDMDRLPDVMFIIDTGYEKNAVSEARKLGIPVVGVVDTNNSPVGIDYVIPGNDDSIRAVQLYAQSAATAILRGKASGVDFGAVADEFVEMEPETEQGATGETLGG.

Belongs to the universal ribosomal protein uS2 family.

In Methylococcus capsulatus (strain ATCC 33009 / NCIMB 11132 / Bath), this protein is Small ribosomal subunit protein uS2.